Reading from the N-terminus, the 234-residue chain is Large ribosomal subunit protein uL1 (234 aa).

Belongs to the universal ribosomal protein uL1 family. In terms of assembly, part of the 50S ribosomal subunit.

Its function is as follows. Binds directly to 23S rRNA. The L1 stalk is quite mobile in the ribosome, and is involved in E site tRNA release. Protein L1 is also a translational repressor protein, it controls the translation of the L11 operon by binding to its mRNA. This Erwinia tasmaniensis (strain DSM 17950 / CFBP 7177 / CIP 109463 / NCPPB 4357 / Et1/99) protein is Large ribosomal subunit protein uL1.